Here is a 143-residue protein sequence, read N- to C-terminus: FAD synthase (143 aa).

ATP is bound by residues Thr10 to Phe11, His15 to His18, and Asp93.

This sequence belongs to the archaeal FAD synthase family. Homodimer. It depends on a divalent metal cation as a cofactor.

The enzyme catalyses FMN + ATP + H(+) = FAD + diphosphate. It participates in cofactor biosynthesis; FAD biosynthesis; FAD from FMN: step 1/1. In terms of biological role, catalyzes the transfer of the AMP portion of ATP to flavin mononucleotide (FMN) to produce flavin adenine dinucleotide (FAD) coenzyme. This chain is FAD synthase, found in Haloterrigena turkmenica (strain ATCC 51198 / DSM 5511 / JCM 9101 / NCIMB 13204 / VKM B-1734 / 4k) (Halococcus turkmenicus).